Consider the following 379-residue polypeptide: Chaperone protein DnaJ (379 aa).

The region spanning 4–69 (DLYETLGVKK…QKRAAYDRYG (66 aa)) is the J domain. Residues 137-215 (GKTAQIRVPT…CHGQGRVTEE (79 aa)) form a CR-type zinc finger. Residues Cys150, Cys153, Cys167, Cys170, Cys189, Cys192, Cys203, and Cys206 each coordinate Zn(2+). 4 CXXCXGXG motif repeats span residues 150–157 (CDVCTGSG), 167–174 (CATCQGSG), 189–196 (CPTCGGRG), and 203–210 (CTKCHGQG).

It belongs to the DnaJ family. In terms of assembly, homodimer. Requires Zn(2+) as cofactor.

The protein localises to the cytoplasm. In terms of biological role, participates actively in the response to hyperosmotic and heat shock by preventing the aggregation of stress-denatured proteins and by disaggregating proteins, also in an autonomous, DnaK-independent fashion. Unfolded proteins bind initially to DnaJ; upon interaction with the DnaJ-bound protein, DnaK hydrolyzes its bound ATP, resulting in the formation of a stable complex. GrpE releases ADP from DnaK; ATP binding to DnaK triggers the release of the substrate protein, thus completing the reaction cycle. Several rounds of ATP-dependent interactions between DnaJ, DnaK and GrpE are required for fully efficient folding. Also involved, together with DnaK and GrpE, in the DNA replication of plasmids through activation of initiation proteins. In Sinorhizobium fredii (strain NBRC 101917 / NGR234), this protein is Chaperone protein DnaJ.